Here is a 157-residue protein sequence, read N- to C-terminus: Small ribosomal subunit protein uS7 (157 aa).

This sequence belongs to the universal ribosomal protein uS7 family. As to quaternary structure, part of the 30S ribosomal subunit. Contacts proteins S9 and S11.

In terms of biological role, one of the primary rRNA binding proteins, it binds directly to 16S rRNA where it nucleates assembly of the head domain of the 30S subunit. Is located at the subunit interface close to the decoding center, probably blocks exit of the E-site tRNA. In Roseiflexus castenholzii (strain DSM 13941 / HLO8), this protein is Small ribosomal subunit protein uS7.